The following is a 345-amino-acid chain: Glycerol-3-phosphate dehydrogenase [NAD(P)+] (345 aa).

Positions 23, 24, 44, and 118 each coordinate NADPH. Sn-glycerol 3-phosphate-binding residues include Lys118, Gly147, and Thr149. Residue Ala151 participates in NADPH binding. Residues Lys203, Asp256, Ser266, Arg267, and Asn268 each contribute to the sn-glycerol 3-phosphate site. Residue Lys203 is the Proton acceptor of the active site. Arg267 provides a ligand contact to NADPH. Val291 and Glu293 together coordinate NADPH.

It belongs to the NAD-dependent glycerol-3-phosphate dehydrogenase family.

Its subcellular location is the cytoplasm. The catalysed reaction is sn-glycerol 3-phosphate + NAD(+) = dihydroxyacetone phosphate + NADH + H(+). It carries out the reaction sn-glycerol 3-phosphate + NADP(+) = dihydroxyacetone phosphate + NADPH + H(+). It participates in membrane lipid metabolism; glycerophospholipid metabolism. In terms of biological role, catalyzes the reduction of the glycolytic intermediate dihydroxyacetone phosphate (DHAP) to sn-glycerol 3-phosphate (G3P), the key precursor for phospholipid synthesis. The polypeptide is Glycerol-3-phosphate dehydrogenase [NAD(P)+] (Vibrio campbellii (strain ATCC BAA-1116)).